Reading from the N-terminus, the 111-residue chain is Rho GDP-dissociation inhibitor 1 (111 aa).

Residues K57 and K60 each participate in a glycyl lysine isopeptide (Lys-Gly) (interchain with G-Cter in SUMO1); alternate cross-link. Residues K57 and K60 each participate in a glycyl lysine isopeptide (Lys-Gly) (interchain with G-Cter in SUMO2); alternate cross-link. Residue K60 is modified to N6-acetyllysine; alternate. The residue at position 60 (K60) is an N6-succinyllysine; alternate.

The protein belongs to the Rho GDI family. In terms of assembly, monomer. Interacts with FER. Interacts with PLXNB3. Forms a heterodimer with RAC1. Interacts with RHOA, the affinity is increased by three orders of magnitude when RHOA is prenylated. Interacts with PSMD10; the interaction increases ARHGDIA association with RHOA, leading to ARHGDIA-mediated inactivation of RHOA and ROCK and prolonged AKT activation. Interacts with KANK2; the interaction is direct and may regulate the interaction of ARHGDIA with RHOA, RAC1 and CDC42. Interacts with RHOC. Interacts with CDC42. Interacts with NGFR (via death domain); NGFR binding decreases the affinity for RHOA. Post-translationally, the N-terminus is blocked.

It localises to the cytoplasm. Functionally, controls Rho proteins homeostasis. Regulates the GDP/GTP exchange reaction of the Rho proteins by inhibiting the dissociation of GDP from them, and the subsequent binding of GTP to them. Retains Rho proteins such as CDC42, RAC1 and RHOA in an inactive cytosolic pool, regulating their stability and protecting them from degradation. Actively involved in the recycling and distribution of activated Rho GTPases in the cell, mediates extraction from membranes of both inactive and activated molecules due its exceptionally high affinity for prenylated forms. Through the modulation of Rho proteins, may play a role in cell motility regulation. In glioma cells, inhibits cell migration and invasion by mediating the signals of SEMA5A and PLXNB3 that lead to inactivation of RAC1. This chain is Rho GDP-dissociation inhibitor 1 (ARHGDIA), found in Cavia porcellus (Guinea pig).